We begin with the raw amino-acid sequence, 254 residues long: Alcohol dehydrogenase (254 aa).

Phe10–Leu33 provides a ligand contact to NAD(+). Ser138 lines the substrate pocket. Tyr151 acts as the Proton acceptor in catalysis.

Belongs to the short-chain dehydrogenases/reductases (SDR) family. As to quaternary structure, homodimer.

The enzyme catalyses a primary alcohol + NAD(+) = an aldehyde + NADH + H(+). The catalysed reaction is a secondary alcohol + NAD(+) = a ketone + NADH + H(+). In Drosophila madeirensis (Fruit fly), this protein is Alcohol dehydrogenase (Adh).